The following is a 115-amino-acid chain: Probable 4-amino-4-deoxy-L-arabinose-phosphoundecaprenol flippase subunit ArnE (115 aa).

4 helical membrane passes run 1-21 (MIVG…GQLC), 43-63 (WLAL…NVLQ), 65-85 (LPLS…TLAA), and 93-113 (TTAR…LMSI). In terms of domain architecture, EamA spans 44-113 (LALAVLLLGL…IMLGILLMSI (70 aa)).

This sequence belongs to the ArnE family. In terms of assembly, heterodimer of ArnE and ArnF.

The protein resides in the cell inner membrane. It functions in the pathway bacterial outer membrane biogenesis; lipopolysaccharide biosynthesis. Its function is as follows. Translocates 4-amino-4-deoxy-L-arabinose-phosphoundecaprenol (alpha-L-Ara4N-phosphoundecaprenol) from the cytoplasmic to the periplasmic side of the inner membrane. This is Probable 4-amino-4-deoxy-L-arabinose-phosphoundecaprenol flippase subunit ArnE from Serratia proteamaculans (strain 568).